A 131-amino-acid chain; its full sequence is Large ribosomal subunit protein bL19 (131 aa).

Basic and acidic residues predominate over residues 111 to 124 (RIAERAERGSEKGK). The segment at 111 to 131 (RIAERAERGSEKGKTTPAAAE) is disordered.

The protein belongs to the bacterial ribosomal protein bL19 family.

This protein is located at the 30S-50S ribosomal subunit interface and may play a role in the structure and function of the aminoacyl-tRNA binding site. This chain is Large ribosomal subunit protein bL19, found in Methylobacterium nodulans (strain LMG 21967 / CNCM I-2342 / ORS 2060).